The following is a 1214-amino-acid chain: Reverse gyrase (1214 aa).

The RG N-terminal-type zinc finger occupies 1–37 (MKAIYRDMCPNCRGAITDERLAAKNPCDACLDEPISM). Residues C9, C12, C27, and C30 each contribute to the Zn(2+) site. Residues Q89 and 106–113 (APTGMGKS) contribute to the ATP site. One can recognise a Helicase ATP-binding domain in the interval 93-252 (VKRIIKGKSF…WEIIKLKKQL (160 aa)). A DEAD box motif is present at residues 213–216 (DDVD). The segment at 635-1214 (DLVKSALMIV…YEEILRYVKS (580 aa)) is topoisomerase I. In terms of domain architecture, Toprim spans 639-802 (SALMIVESPN…VIKRIEFHEV (164 aa)). E645 serves as a coordination point for Mg(2+). An RG C-terminal-type zinc finger spans residues 719-748 (IKRCRDCGHQFVDWEEKGVCPRCGSRNVYD). C722, C725, C738, and C741 together coordinate Zn(2+). Position 771 (D771) interacts with Mg(2+). Residues 818–1212 (NEDRVNAQLV…ELYEEILRYV (395 aa)) enclose the Topo IA-type catalytic domain. Y955 serves as the catalytic O-(5'-phospho-DNA)-tyrosine intermediate.

This sequence in the N-terminal section; belongs to the DEAD box helicase family. DDVD subfamily. It in the C-terminal section; belongs to the type IA topoisomerase family. In terms of assembly, monomer. It depends on Zn(2+) as a cofactor. Requires Mg(2+) as cofactor.

Its subcellular location is the cytoplasm. It catalyses the reaction ATP + H2O = ADP + phosphate + H(+). Modifies the topological state of DNA by introducing positive supercoils in an ATP-dependent process. Increases the linking number in steps of +1. Binds to single-stranded DNA, transiently cleaves and then rejoins the ends, introducing a positive supercoil in the process. The scissile phosphodiester is attacked by the catalytic tyrosine of the enzyme, resulting in the formation of a DNA-(5'-phosphotyrosyl)-enzyme intermediate. Probably involved in rewinding DNA strands in regions of the chromosome that have opened up to allow replication, transcription, DNA repair and/or for DNA protection. The polypeptide is Reverse gyrase (Pyrococcus furiosus (strain ATCC 43587 / DSM 3638 / JCM 8422 / Vc1)).